We begin with the raw amino-acid sequence, 487 residues long: Mu-like prophage FluMu tail sheath protein (487 aa).

This sequence belongs to the myoviridae tail sheath protein family.

Major component of the tail. The polypeptide is Mu-like prophage FluMu tail sheath protein (Haemophilus influenzae (strain ATCC 51907 / DSM 11121 / KW20 / Rd)).